The following is a 387-amino-acid chain: Pyrophosphate--fructose 6-phosphate 1-phosphotransferase 3 (387 aa).

Diphosphate is bound at residue G15. D114 serves as a coordination point for Mg(2+). Substrate-binding positions include 140–142 (TID), 186–188 (MGR), E247, and 308–311 (YELR). Residue D142 is the Proton acceptor of the active site.

This sequence belongs to the phosphofructokinase type A (PFKA) family. PPi-dependent PFK group II subfamily. Clade 'Short' sub-subfamily. Homotetramer. Mg(2+) is required as a cofactor.

It localises to the cytoplasm. It carries out the reaction beta-D-fructose 6-phosphate + diphosphate = beta-D-fructose 1,6-bisphosphate + phosphate + H(+). It functions in the pathway carbohydrate degradation; glycolysis; D-glyceraldehyde 3-phosphate and glycerone phosphate from D-glucose: step 3/4. Its activity is regulated as follows. Non-allosteric. Catalyzes the phosphorylation of D-fructose 6-phosphate, the first committing step of glycolysis. Uses inorganic phosphate (PPi) as phosphoryl donor instead of ATP like common ATP-dependent phosphofructokinases (ATP-PFKs), which renders the reaction reversible, and can thus function both in glycolysis and gluconeogenesis. Consistently, PPi-PFK can replace the enzymes of both the forward (ATP-PFK) and reverse (fructose-bisphosphatase (FBPase)) reactions. This chain is Pyrophosphate--fructose 6-phosphate 1-phosphotransferase 3 (pfk3), found in Trichomonas vaginalis (strain ATCC PRA-98 / G3).